The primary structure comprises 290 residues: uncharacterized protein (290 aa).

2 disordered regions span residues 1-98 (MLGQ…SRRV) and 209-236 (LSGQRGAGPGNSAYTPRRSQGGPRAATT). Positions 63–76 (KPDRVRPGQRDRIG) are enriched in basic and acidic residues. Low complexity predominate over residues 87 to 97 (AGQARAASSRR). A helical membrane pass occupies residues 261-281 (CILTALLAVSFHSIGVVIMTS).

It localises to the membrane. This is an uncharacterized protein from Homo sapiens (Human).